The chain runs to 130 residues: Ribosome-binding factor A (130 aa).

It belongs to the RbfA family. Monomer. Binds 30S ribosomal subunits, but not 50S ribosomal subunits or 70S ribosomes.

The protein resides in the cytoplasm. One of several proteins that assist in the late maturation steps of the functional core of the 30S ribosomal subunit. Associates with free 30S ribosomal subunits (but not with 30S subunits that are part of 70S ribosomes or polysomes). Required for efficient processing of 16S rRNA. May interact with the 5'-terminal helix region of 16S rRNA. This chain is Ribosome-binding factor A, found in Flavobacterium psychrophilum (strain ATCC 49511 / DSM 21280 / CIP 103535 / JIP02/86).